The following is a 123-amino-acid chain: UPF0102 protein Psyr_4114 (123 aa).

The protein belongs to the UPF0102 family.

This is UPF0102 protein Psyr_4114 from Pseudomonas syringae pv. syringae (strain B728a).